The sequence spans 23 residues: Caerulein precursor fragment R6 (23 aa).

Expressed by the skin glands.

The protein localises to the secreted. In terms of biological role, antimicrobial peptide. The chain is Caerulein precursor fragment R6 from Xenopus ruwenzoriensis (Uganda clawed frog).